The chain runs to 317 residues: Transaldolase A (317 aa).

Lysine 132 functions as the Schiff-base intermediate with substrate in the catalytic mechanism.

This sequence belongs to the transaldolase family. Type 1 subfamily. As to quaternary structure, homodimer.

It localises to the cytoplasm. The enzyme catalyses D-sedoheptulose 7-phosphate + D-glyceraldehyde 3-phosphate = D-erythrose 4-phosphate + beta-D-fructose 6-phosphate. Its pathway is carbohydrate degradation; pentose phosphate pathway; D-glyceraldehyde 3-phosphate and beta-D-fructose 6-phosphate from D-ribose 5-phosphate and D-xylulose 5-phosphate (non-oxidative stage): step 2/3. Transaldolase is important for the balance of metabolites in the pentose-phosphate pathway. This is Transaldolase A (talA) from Pasteurella multocida (strain Pm70).